The chain runs to 839 residues: ABC transporter A family member 7 (839 aa).

A run of 7 helical transmembrane segments spans residues 30–50, 238–258, 286–306, 321–341, 352–372, 378–398, and 419–439; these read GVQIAIPMALVIVLVILKLWI, IASLLGGSFFPFALSFVLPLF, IMTFIFNFLTYVVIVSVISLI, FALFLLLFLWGLSMVSFAFFL, SIFGYFFVMVMVNLNSTLSLF, VFYYWVPILAFSRGISTLCGL, and ILFWLFIDTIVYLTLAVYLDK. The region spanning 525 to 756 is the ABC transporter domain; that stretch reads LIVQGLRKQF…FGDGYSVRID (232 aa). ATP is bound at residue 559-566; the sequence is GPNGAGKT.

The protein belongs to the ABC transporter superfamily. ABCA family.

Its subcellular location is the membrane. This chain is ABC transporter A family member 7 (abcA7), found in Dictyostelium discoideum (Social amoeba).